The primary structure comprises 1755 residues: Transposon TyH3 Gag-Pol polyprotein (1755 aa).

Polar residues-rich tracts occupy residues 1-23 (MESQ…SVTS), 48-60 (TKAN…TPAS), and 127-152 (QSQF…GNTF). Disordered regions lie at residues 1–93 (MESQ…MMTQ), 126–173 (PQSQ…RPPP), and 352–421 (GSRN…SKST). A compositionally biased stretch (low complexity) spans 153–165 (TDSSSADSDMTST). The tract at residues 299 to 401 (NNGIHINNKV…NSKSKTARAH (103 aa)) is RNA-binding. Positions 402–418 (NVSTSNNSPSTDNDSIS) are enriched in low complexity. Phosphoserine is present on S416. D461 functions as the For protease activity; shared with dimeric partner in the catalytic mechanism. Residues 583 to 640 (NVHTSESTRKYPYPFIHRMLAHANAQTIRYSLKNNTITYFNESDVDWSSAIDYQCPDC) form an integrase-type zinc finger-like region. The Integrase catalytic domain occupies 660 to 835 (NSYEPFQYLH…AGLDISTLLP (176 aa)). Mg(2+) contacts are provided by D671 and D736. Disordered regions lie at residues 956–1087 (SKAV…ETEK), 1092–1111 (RSPS…NIVP), and 1130–1187 (DLPL…DNET). Residues 960–969 (SPTDSTPPST) are compositionally biased toward low complexity. Residues 1005-1015 (STPQISNIEST) show a composition bias toward polar residues. A compositionally biased stretch (basic and acidic residues) spans 1038–1053 (ESSHASKSKDFRHSDS). Polar residues-rich tracts occupy residues 1054 to 1082 (YSEN…QISD) and 1101 to 1111 (PENNSSHNIVP). The Bipartite nuclear localization signal signature appears at 1178-1212 (KKRSLEDNETEIKVSRDTWNTKNMRSLEPPRSKKR). Positions 1338-1476 (NNYYITQLDI…DILGLEIKYQ (139 aa)) constitute a Reverse transcriptase Ty1/copia-type domain. Residues D1346, D1427, D1428, D1610, E1652, and D1685 each coordinate Mg(2+). The region spanning 1610-1752 (DASYGNQPYY…IKTFKLLTNK (143 aa)) is the RNase H Ty1/copia-type domain.

In terms of assembly, the capsid protein forms a homotrimer, from which the VLPs are assembled. The protease is a homodimer, whose active site consists of two apposed aspartic acid residues. In terms of processing, initially, virus-like particles (VLPs) are composed of the structural unprocessed proteins Gag and Gag-Pol, and also contain the host initiator methionine tRNA (tRNA(i)-Met) which serves as a primer for minus-strand DNA synthesis, and a dimer of genomic Ty RNA. Processing of the polyproteins occurs within the particle and proceeds by an ordered pathway, called maturation. First, the protease (PR) is released by autocatalytic cleavage of the Gag-Pol polyprotein yielding capsid protein p45 and a Pol-p154 precursor protein. This cleavage is a prerequisite for subsequent processing of Pol-p154 at the remaining sites to release the mature structural and catalytic proteins. Maturation takes place prior to the RT reaction and is required to produce transposition-competent VLPs.

Its subcellular location is the cytoplasm. It localises to the nucleus. It catalyses the reaction DNA(n) + a 2'-deoxyribonucleoside 5'-triphosphate = DNA(n+1) + diphosphate. The enzyme catalyses Endonucleolytic cleavage to 5'-phosphomonoester.. Capsid protein (CA) is the structural component of the virus-like particle (VLP), forming the shell that encapsulates the retrotransposons dimeric RNA genome. The particles are assembled from trimer-clustered units and there are holes in the capsid shells that allow for the diffusion of macromolecules. CA also has nucleocapsid-like chaperone activity, promoting primer tRNA(i)-Met annealing to the multipartite primer-binding site (PBS), dimerization of Ty1 RNA and initiation of reverse transcription. Its function is as follows. The aspartyl protease (PR) mediates the proteolytic cleavages of the Gag and Gag-Pol polyproteins after assembly of the VLP. Functionally, reverse transcriptase/ribonuclease H (RT) is a multifunctional enzyme that catalyzes the conversion of the retro-elements RNA genome into dsDNA within the VLP. The enzyme displays a DNA polymerase activity that can copy either DNA or RNA templates, and a ribonuclease H (RNase H) activity that cleaves the RNA strand of RNA-DNA heteroduplexes during plus-strand synthesis and hydrolyzes RNA primers. The conversion leads to a linear dsDNA copy of the retrotransposon that includes long terminal repeats (LTRs) at both ends. In terms of biological role, integrase (IN) targets the VLP to the nucleus, where a subparticle preintegration complex (PIC) containing at least integrase and the newly synthesized dsDNA copy of the retrotransposon must transit the nuclear membrane. Once in the nucleus, integrase performs the integration of the dsDNA into the host genome. This Saccharomyces cerevisiae (Baker's yeast) protein is Transposon TyH3 Gag-Pol polyprotein (TY1B).